A 243-amino-acid chain; its full sequence is CRISPR-associated endoribonuclease Cas6 (243 aa).

This sequence belongs to the CRISPR-associated endoribonuclease Cas6 family. In terms of assembly, part of the Csm effector complex that includes at least Cas10(1), Csm2(3), Csm3(5), Csm4(1); the presence of Csm5 and Cas6 may depend on the processing state of precursor crRNA. Csm with a precursor crRNA does not include Csm5, while Cas6, the enzyme probably involved in pre-crRNA processing, is found associated with a subset of the Csm complex that is probably in the process of pre-crRNA maturation. The Csm complex is elongated and slightly twisted with a maximal length of 215 Angstroms and a diameter of 75-80 Angstroms. It has been modeled to have a central protein filamant of Csm3 subunits along which the dsRNA helix of paired crRNA and target RNA binds. The filament is capped at one end by Cas10 and Csm4 and at the other end by Csm5; ssDNA is thought to bind to the N-terminal HD domain of Cas10.

Its function is as follows. CRISPR (clustered regularly interspaced short palindromic repeat) is an adaptive immune system that provides protection against mobile genetic elements (viruses, transposable elements and conjugative plasmids). CRISPR clusters contain spacers, sequences complementary to antecedent mobile elements, and target invading nucleic acids. CRISPR clusters are transcribed and processed into CRISPR RNA (crRNA). The type III-A Csm effector complex binds crRNA and acts as a crRNA-guided RNase, DNase and cyclic oligoadenylate synthase; binding of target RNA cognate to the crRNA is required for all activities. In a heterologous host this Csm effector complex restricts ssRNA phage MS2, suggesting it may target RNA viruses in vivo. Functionally, csm functions as a non-specific ssDNase. Base-pairing between crRNA and target RNA to form a ternary Csm complex activates a ssDNase activity; target RNA cleavage suppresses the ssDNase, a temporal control that prevents uncontrolled DNA degradation. Viral RNA transcripts probably tether the Csm complex to the viral genome, recruiting Cas10 ssDNA activity which is able to degrade DNA in the transcription bubble, spatially controlling the DNase activity. In terms of biological role, this protein processes pre-crRNA into individual crRNA units. The sequence is that of CRISPR-associated endoribonuclease Cas6 from Streptococcus thermophilus.